Here is a 333-residue protein sequence, read N- to C-terminus: tRNA (guanine(37)-N(1))/4-demethylwyosine(37)-methyltransferase Taw22 (333 aa).

S-adenosyl-L-methionine contacts are provided by residues R174, F191, 213–214 (EI), and 243–244 (DV).

It belongs to the class I-like SAM-binding methyltransferase superfamily. TRM5/TYW2 family.

The protein localises to the cytoplasm. The catalysed reaction is guanosine(37) in tRNA + S-adenosyl-L-methionine = N(1)-methylguanosine(37) in tRNA + S-adenosyl-L-homocysteine + H(+). It catalyses the reaction 4-demethylwyosine(37) in tRNA(Phe) + S-adenosyl-L-methionine = isowyosine(37) in tRNA(Phe) + S-adenosyl-L-homocysteine + H(+). Catalyzes both the N1-methylation of guanosine and the C7-methylation of 4-demethylwyosine (imG-14) at position 37 in tRNA(Phe). The polypeptide is tRNA (guanine(37)-N(1))/4-demethylwyosine(37)-methyltransferase Taw22 (Pyrococcus abyssi (strain GE5 / Orsay)).